A 300-amino-acid polypeptide reads, in one-letter code: ADP-ribosyl cyclase/cyclic ADP-ribose hydrolase 1 (300 aa).

Topologically, residues 1–21 (MANCEFSPVSGDKPCCRLSRR) are cytoplasmic. The chain crosses the membrane as a helical; Signal-anchor for type II membrane protein span at residues 22-42 (AQLCLGVSILVLILVVVLAVV). Over 43 to 300 (VPRWRQQWSG…PEDSSCTSEI (258 aa)) the chain is Extracellular. 3 disulfides stabilise this stretch: C67–C82, C99–C180, and C160–C173. Residue N100 is glycosylated (N-linked (GlcNAc...) asparagine). Residue C119 is part of the active site. The N-linked (GlcNAc...) asparagine glycan is linked to N164. The active site involves C201. Residues N209 and N219 are each glycosylated (N-linked (GlcNAc...) asparagine). Disulfide bonds link C254–C275 and C287–C296.

It belongs to the ADP-ribosyl cyclase family. In terms of assembly, homodimer. As to expression, expressed at high levels in pancreas, liver, kidney, brain, testis, ovary, placenta, malignant lymphoma and neuroblastoma.

Its subcellular location is the cell surface. It localises to the membrane. The catalysed reaction is 2'-phospho-cyclic ADP-ribose + nicotinate = nicotinate-adenine dinucleotide phosphate. It carries out the reaction NAD(+) = cyclic ADP-beta-D-ribose + nicotinamide + H(+). The enzyme catalyses NAD(+) + H2O = ADP-D-ribose + nicotinamide + H(+). It catalyses the reaction cyclic ADP-beta-D-ribose + H2O = ADP-D-ribose. The catalysed reaction is NADP(+) = 2'-phospho-cyclic ADP-ribose + nicotinamide. It carries out the reaction nicotinate + NADP(+) = nicotinate-adenine dinucleotide phosphate + nicotinamide. ATP inhibits the cADPR hydrolyzing activity. Its function is as follows. Synthesizes cyclic ADP-ribose (cADPR), a second messenger for glucose-induced insulin secretion. Synthesizes the Ca(2+) mobilizer nicotinate-adenine dinucleotide phosphate, NAADP(+), from 2'-phospho-cADPR and nicotinic acid, as well as from NADP(+) and nicotinic acid. At both pH 5.0 and pH 7.4 preferentially transforms 2'-phospho-cADPR into NAADP(+), while preferentially cleaving NADP(+) to cADPR and ADPRP rather than into NADDP(+). Has cADPR hydrolase activity. The chain is ADP-ribosyl cyclase/cyclic ADP-ribose hydrolase 1 (CD38) from Homo sapiens (Human).